The following is a 367-amino-acid chain: uncharacterized protein (367 aa).

A helical transmembrane segment spans residues 8–28 (VLIGTFVLAAILAVFGFIYWL).

Its subcellular location is the membrane. This is an uncharacterized protein from Bradyrhizobium diazoefficiens (strain JCM 10833 / BCRC 13528 / IAM 13628 / NBRC 14792 / USDA 110).